We begin with the raw amino-acid sequence, 492 residues long: Probable small intestine urate exporter (492 aa).

The tract at residues 1-20 (MSTGADLKAREGDIPSDNMT) is disordered. N-linked (GlcNAc...) asparagine glycosylation is found at N18, N44, N53, N63, N72, and N87. Transmembrane regions (helical) follow at residues 112–132 (LSYGSFIAPIPTGYVAGVFGA), 134–154 (YVVGLGLLISSVLTLFIPLAA), 156–176 (AGVALLIVLRVIQGMAQVMVL), 198–218 (IAASGSMLGTFLVLIAGGLIC), 225–245 (YIFYIFGGIGCACCLLWFPLV), 287–307 (LPLWAIVVSYFCEYWLLSTVM), 327–347 (ILSALPFMFGCVCIILGGLLA), 363–383 (KLFTAVGVLASSGILLPLPWV), 393–413 (FLVLSSVFASLCDSGALINFL), 426–446 (LLQVFSYLAGGIAPTVAGFFI), and 456–476 (NVFFLAAAIDVVGLLFYLIFS).

It belongs to the major facilitator superfamily. Sodium/anion cotransporter family. Expressed in the small intestine (at protein level).

Its subcellular location is the apical cell membrane. It carries out the reaction 3 Na(+)(out) + phosphate(out) = 3 Na(+)(in) + phosphate(in). The enzyme catalyses urate(out) + n chloride(in) = urate(in) + n chloride(out). It catalyses the reaction L-thyroxine(out) = L-thyroxine(in). The catalysed reaction is 3,3',5-triiodo-L-thyronine(out) = 3,3',5-triiodo-L-thyronine(in). Acts as a membrane potential-dependent organic anion transporter, the transport requires a low concentration of chloride ions. Mediates chloride-dependent transport of urate. Mediates sodium-independent high affinity transport of thyroid hormones including L-thyroxine (T4) and 3,3',5-triiodo-L-thyronine (T3). Can actively transport inorganic phosphate into cells via Na(+) cotransport. This is Probable small intestine urate exporter (Slc17a4) from Mus musculus (Mouse).